The following is a 189-amino-acid chain: Large ribosomal subunit protein bL9 (189 aa).

The protein belongs to the bacterial ribosomal protein bL9 family.

Its function is as follows. Binds to the 23S rRNA. The chain is Large ribosomal subunit protein bL9 from Methylobacterium nodulans (strain LMG 21967 / CNCM I-2342 / ORS 2060).